A 218-amino-acid polypeptide reads, in one-letter code: Glutathione S-transferase Mu 2 (218 aa).

Residues 2-88 (PMTLGYWNIR…YIARKHNLCG (87 aa)) enclose the GST N-terminal domain. Residue 7–8 (YW) participates in glutathione binding. Residues S27 and S44 each carry the phosphoserine modification. Residues 43 to 46 (RSQW), K50, 59 to 60 (NL), and 72 to 73 (QS) each bind glutathione. Residues 90–208 (TEKEKIREDI…KSSRFLPRPV (119 aa)) enclose the GST C-terminal domain. Y116 is a binding site for substrate.

The protein belongs to the GST superfamily. Mu family. As to quaternary structure, homodimer.

It is found in the cytoplasm. The catalysed reaction is RX + glutathione = an S-substituted glutathione + a halide anion + H(+). The enzyme catalyses 11(S)-hydroxy-14(S),15(S)-epoxy-(5Z,8Z,12E)-eicosatrienoate + glutathione = (11S,15S)-dihydroxy-14(R)-S-glutathionyl-(5Z,8Z,12E)-eicosatrienoate. Conjugation of reduced glutathione to a wide number of exogenous and endogenous hydrophobic electrophiles. Participates in the formation of novel hepoxilin regioisomers. Has activity toward aflatoxin B(1)-8,9-epoxide (AFBO). This Macaca fascicularis (Crab-eating macaque) protein is Glutathione S-transferase Mu 2 (GSTM2).